Consider the following 209-residue polypeptide: Protein GrpE (209 aa).

The interval 1-63 is disordered; sequence MKKSRKKENM…NPEEACREEN (63 aa). Composition is skewed to basic and acidic residues over residues 7–42 and 50–63; these read KENM…KVSP and EAEK…REEN.

It belongs to the GrpE family. Homodimer.

It is found in the cytoplasm. Participates actively in the response to hyperosmotic and heat shock by preventing the aggregation of stress-denatured proteins, in association with DnaK and GrpE. It is the nucleotide exchange factor for DnaK and may function as a thermosensor. Unfolded proteins bind initially to DnaJ; upon interaction with the DnaJ-bound protein, DnaK hydrolyzes its bound ATP, resulting in the formation of a stable complex. GrpE releases ADP from DnaK; ATP binding to DnaK triggers the release of the substrate protein, thus completing the reaction cycle. Several rounds of ATP-dependent interactions between DnaJ, DnaK and GrpE are required for fully efficient folding. The protein is Protein GrpE of Methanosarcina mazei (strain ATCC BAA-159 / DSM 3647 / Goe1 / Go1 / JCM 11833 / OCM 88) (Methanosarcina frisia).